We begin with the raw amino-acid sequence, 153 residues long: MGKISSLPTQLFKICLCDFLKIKIHIMSSSHLFYLALCLLTFTSSATAGPETLCGAELVDALQFVCGPRGFYFNKPTGYGSSIRRAPQTGIVDECCFRSCDLRRLEMYCAPLKPTKSARSIRAQRHTDMPKTQKEVHLKNTSRGSAGNKTYRM.

The b stretch occupies residues 49–77; it reads GPETLCGAELVDALQFVCGPRGFYFNKPT. Intrachain disulfides connect Cys54-Cys96, Cys66-Cys109, and Cys95-Cys100. Residues 78–89 form a c region; it reads GYGSSIRRAPQT. Positions 90 to 110 are a; the sequence is GIVDECCFRSCDLRRLEMYCA. The tract at residues 111–118 is d; sequence PLKPTKSA. The propeptide at 119–153 is e peptide; that stretch reads RSIRAQRHTDMPKTQKEVHLKNTSRGSAGNKTYRM. Residues 119–153 form a disordered region; the sequence is RSIRAQRHTDMPKTQKEVHLKNTSRGSAGNKTYRM. A compositionally biased stretch (basic and acidic residues) spans 125-138; it reads RHTDMPKTQKEVHL. Over residues 139–153 the composition is skewed to polar residues; that stretch reads KNTSRGSAGNKTYRM.

The protein belongs to the insulin family. As to quaternary structure, forms a ternary complex with IGFR1 and ITGAV:ITGB3. Forms a ternary complex with IGFR1 and ITGA6:ITGB4. Forms a ternary complex with IGFBP3 and ALS.

Its subcellular location is the secreted. The insulin-like growth factors, isolated from plasma, are structurally and functionally related to insulin but have a much higher growth-promoting activity. May be a physiological regulator of [1-14C]-2-deoxy-D-glucose (2DG) transport and glycogen synthesis in osteoblasts. Stimulates glucose transport in bone-derived osteoblastic (PyMS) cells and is effective at much lower concentrations than insulin, not only regarding glycogen and DNA synthesis but also with regard to enhancing glucose uptake. May play a role in synapse maturation. Ca(2+)-dependent exocytosis of IGF1 is required for sensory perception of smell in the olfactory bulb. Acts as a ligand for IGF1R. Binds to the alpha subunit of IGF1R, leading to the activation of the intrinsic tyrosine kinase activity which autophosphorylates tyrosine residues in the beta subunit thus initiating a cascade of down-stream signaling events leading to activation of the PI3K-AKT/PKB and the Ras-MAPK pathways. Binds to integrins ITGAV:ITGB3 and ITGA6:ITGB4. Its binding to integrins and subsequent ternary complex formation with integrins and IGFR1 are essential for IGF1 signaling. Induces the phosphorylation and activation of IGFR1, MAPK3/ERK1, MAPK1/ERK2 and AKT1. As part of the MAPK/ERK signaling pathway, acts as a negative regulator of apoptosis in cardiomyocytes via promotion of STUB1/CHIP-mediated ubiquitination and degradation of ICER-type isoforms of CREM. The polypeptide is Insulin-like growth factor 1 (Rattus norvegicus (Rat)).